The chain runs to 89 residues: Small ribosomal subunit protein bS16 (89 aa).

Belongs to the bacterial ribosomal protein bS16 family.

This chain is Small ribosomal subunit protein bS16, found in Nitrosomonas europaea (strain ATCC 19718 / CIP 103999 / KCTC 2705 / NBRC 14298).